The following is a 187-amino-acid chain: Elongation factor P (187 aa).

It belongs to the elongation factor P family.

The protein localises to the cytoplasm. Its pathway is protein biosynthesis; polypeptide chain elongation. Functionally, involved in peptide bond synthesis. Stimulates efficient translation and peptide-bond synthesis on native or reconstituted 70S ribosomes in vitro. Probably functions indirectly by altering the affinity of the ribosome for aminoacyl-tRNA, thus increasing their reactivity as acceptors for peptidyl transferase. The protein is Elongation factor P of Magnetococcus marinus (strain ATCC BAA-1437 / JCM 17883 / MC-1).